The following is a 148-amino-acid chain: MQLHNLEYKKGSRNHKEKRVGRGHGSGLGKTSGRGQDGQKARKSGMVRLAFEGGQTPLYRRVPKVGFNNDRFANKYNVVTLISLVKYETKELTVEFMYANKIAKNEDLPIKVIGNAVLPSGTVVSAHKFSKGALESISNSKAKAQILE.

A compositionally biased stretch (basic and acidic residues) spans Met-1 to Lys-10. A disordered region spans residues Met-1–Arg-42. A compositionally biased stretch (basic residues) spans Gly-11 to Arg-22. Positions Gly-23–Gln-36 are enriched in gly residues.

The protein belongs to the universal ribosomal protein uL15 family. As to quaternary structure, part of the 50S ribosomal subunit.

Its function is as follows. Binds to the 23S rRNA. The polypeptide is Large ribosomal subunit protein uL15 (Ureaplasma parvum serovar 3 (strain ATCC 27815 / 27 / NCTC 11736)).